An 84-amino-acid chain; its full sequence is Agaphelin (84 aa).

Residues 1–26 (MKMRVHLLAVSVLLVVLALQTTPAEA) form the signal peptide. One can recognise a Kazal-like domain in the interval 29 to 82 (NSEMATCACQLIYRPVCASNNESYSNECVLKCASETPTGRSIGLHKVKDGNCNG). Cystine bridges form between C35-C60, C37-C56, and C45-C80. An N-linked (GlcNAc...) asparagine glycan is attached at N49.

Interacts with human ELANE.

Its subcellular location is the secreted. Functionally, functions as a slow and tight inhibitor of host neutrophil elastase (ELANE). Inhibits host proteinase 3 (PRTN3) and chymotrypsin. Does not inhibit other host proteases involved in coagulation or inflammation, such as cathepsin G (CTSG), trypsin, chymase, matriptase, beta-tryptase, kallikrein, urokinase-type plasminogen activator (PLAU), coagulation factors Xa (F10), XIa (F11), XIIa (F12), plasmin (PLG), thrombin (F2) and tissue-type plasminogen activator (PLAT). Inhibits host neutrophil chemotaxis induced by N-formylmethionine-leucyl-phenylalanine (fMLP) in vitro. Inhibits ELANE-mediated potentiation of platelet aggregation induced by CTSG in the host. Does not affect CTSG- or collagen-induced platelet aggregation. Blocks cleavage of tissue factor pathway inhibitor (TFPI) by ELANE in the host. Inhibits neutrophil-induced coagulation in the host by interfering with neutrophil extracellular traps (NET) formation. Exhibits anti-inflammatory activity. Reduces ischemia-induced activation of MAPK and NF-kappa-B pathways in the host. Decreases CCL2 and IL8 production in IL4- or lipopolysaccharide (LPS)-stimulated host epithelial cells. Reduces caspase-3 (CASP3)-dependent apoptosis in damaged host tissues. This chain is Agaphelin, found in Anopheles gambiae (African malaria mosquito).